A 71-amino-acid chain; its full sequence is MTDGRRIERTSIDPKLLELLACPVTKGPLKWDPAKNELISAKAGLAYPVRDGVPVMLPGEARPLEPDKPRR.

It belongs to the UPF0434 family.

In Chelativorans sp. (strain BNC1), this protein is UPF0434 protein Meso_3270.